Consider the following 505-residue polypeptide: ATP synthase subunit alpha (505 aa).

170–177 (GDRQTGKT) lines the ATP pocket.

The protein belongs to the ATPase alpha/beta chains family. In terms of assembly, F-type ATPases have 2 components, CF(1) - the catalytic core - and CF(0) - the membrane proton channel. CF(1) has five subunits: alpha(3), beta(3), gamma(1), delta(1), epsilon(1). CF(0) has four main subunits: a(1), b(1), b'(1) and c(9-12).

It is found in the cellular thylakoid membrane. It carries out the reaction ATP + H2O + 4 H(+)(in) = ADP + phosphate + 5 H(+)(out). Its function is as follows. Produces ATP from ADP in the presence of a proton gradient across the membrane. The alpha chain is a regulatory subunit. The protein is ATP synthase subunit alpha of Trichodesmium erythraeum (strain IMS101).